We begin with the raw amino-acid sequence, 300 residues long: MLPQKKTDSFRLEPVPDQHIEVKDKPRRKWYIGETSVWVFLFLYLIAIAYPLLWMVMSAFKNSDDIFEHSWSLPSSWHPENFVSAWNQGISSYFMNSVIVTALTCVITVFISAWAAYGLSRFEFKGKGFFLVLCLGGLMLTPQVSLVPLYSIIQSLGLYNTYWALILPYAAYRIPFTIILIRSYFLSISKELEEAAYLDGCTSFGVFFRIFLPMSVPILVTSGILTAYHTWNEFMFAIIFIDDENLRTIPAGLMQFRDALQTDWGVLLAGLTISAAPIIILFLLMQKYFVRGIASGSVKG.

6 consecutive transmembrane segments (helical) span residues 37 to 57 (VWVF…WMVM), 98 to 118 (VIVT…AAYG), 129 to 149 (FFLV…LVPL), 161 to 181 (TYWA…IILI), 204 to 224 (FGVF…TSGI), and 264 to 284 (WGVL…LFLL). Positions 94 to 285 (FMNSVIVTAL…APIIILFLLM (192 aa)) constitute an ABC transmembrane type-1 domain.

Belongs to the binding-protein-dependent transport system permease family. MalFG subfamily.

The protein resides in the cell membrane. In terms of biological role, probably part of the binding-protein-dependent transport system YurMNO. Probably responsible for the translocation of the substrate across the membrane. This chain is Probable ABC transporter permease protein YurM (yurM), found in Bacillus subtilis (strain 168).